The primary structure comprises 324 residues: Rho crystallin (324 aa).

Residue threonine 2 is modified to N-acetylthreonine. Position 218–281 (218–281 (SVLGSHRDRN…SFTPARIKQN (64 aa))) interacts with NADP(+).

The protein belongs to the aldo/keto reductase family. As to quaternary structure, monomer.

This Aquarana catesbeiana (American bullfrog) protein is Rho crystallin.